Here is a 411-residue protein sequence, read N- to C-terminus: Carbohydrate sulfotransferase 5 (411 aa).

Residues 1 to 30 (MGMRARVPKVAHSTRRPPAARMWLPRFSSK) are Cytoplasmic-facing. A helical; Signal-anchor for type II membrane protein transmembrane segment spans residues 31-48 (TVTVLLLAQTTCLLLFII). At 49-411 (SRPGPSSPAG…PDHFSWASPD (363 aa)) the chain is on the lumenal side. Residue 71-77 (WRSGSSF) participates in 3'-phosphoadenylyl sulfate binding. An N-linked (GlcNAc...) asparagine glycan is attached at Asn-138. 224–232 (RDPRAVLRS) contacts 3'-phosphoadenylyl sulfate. Asn-327 and Asn-350 each carry an N-linked (GlcNAc...) asparagine glycan.

This sequence belongs to the sulfotransferase 1 family. Gal/GlcNAc/GalNAc subfamily. As to expression, predominantly expressed in small and large intestines and colon. Weakly expressed in lymphocytes. Not expressed in other tissues. Down-regulated in colonic adenocarcinomas.

Its subcellular location is the golgi apparatus membrane. Its function is as follows. Sulfotransferase that utilizes 3'-phospho-5'-adenylyl sulfate (PAPS) as sulfonate donor to catalyze the transfer of sulfate to position 6 of non-reducing N-acetylglucosamine (GlcNAc) residues and O-linked sugars of mucin-type acceptors. Acts on the non-reducing terminal GlcNAc of short carbohydrate substrates. However, it does not transfer sulfate to longer carbohydrate substrates that have poly-N-acetyllactosamine structures. Has no activity toward keratan. Not involved in generating HEV-expressed ligands for SELL. Its substrate specificity may be influenced by its subcellular location. The polypeptide is Carbohydrate sulfotransferase 5 (CHST5) (Homo sapiens (Human)).